Reading from the N-terminus, the 214-residue chain is Calcineurin B homologous protein 3 (214 aa).

G2 carries N-myristoyl glycine lipidation. The EF-hand domain maps to 110–145 (CRTDKLRFLFNMYDSDNDNKITLEEYRKVVEELLSG). Ca(2+) is bound by residues D123, D125, D127, K129, and E134.

The protein belongs to the calcineurin regulatory subunit family. CHP subfamily. Monomer. Homodimer.

It localises to the nucleus. The protein localises to the cytoplasm. The protein resides in the membrane. It is found in the cell membrane. Its subcellular location is the cell projection. It localises to the lamellipodium. The protein localises to the ruffle membrane. Functions as an integral cofactor in cell pH regulation by controlling plasma membrane-type Na(+)/H(+) exchange activity. Promotes the induction of hematopoietic stem cell differentiation toward megakaryocytic lineage. Essential for the coupling of ERK cascade activation with the expression of ETS family genes in megakaryocytic differentiation. Also involved in granulocytic differentiation in a ERK-dependent manner. Inhibits the phosphatase activity of calcineurin. In Xenopus laevis (African clawed frog), this protein is Calcineurin B homologous protein 3.